A 182-amino-acid polypeptide reads, in one-letter code: UPF0215 protein Pcal_0119 (182 aa).

Belongs to the UPF0215 family.

This chain is UPF0215 protein Pcal_0119, found in Pyrobaculum calidifontis (strain DSM 21063 / JCM 11548 / VA1).